A 512-amino-acid chain; its full sequence is Glycosyltransferase sdnJ (512 aa).

An N-terminal signal peptide occupies residues 1–24 (MHAKRPSVLFFTISDFGYVNVVLA). Asn207 is a glycosylation site (N-linked (GlcNAc...) asparagine).

This sequence belongs to the UDP-glycosyltransferase family.

It carries out the reaction sordaricin + GDP-6-deoxy-alpha-D-altrose = 4'-O-demethylsordarin + GDP + H(+). The protein operates within antibiotic biosynthesis. In terms of biological role, glycosyltransferase; part of the gene cluster that mediates the biosynthesis of sordarin and hypoxysordarin, glycoside antibiotics with a unique tetracyclic diterpene aglycone structure. First, the geranylgeranyl diphosphate synthase sdnC constructs GGDP from farnesyl diphosphate and isopentenyl diphosphate. The diterpene cyclase sdnA then catalyzes the cyclization of GGDP to afford cycloaraneosene. Cycloaraneosene is then hydroxylated four times by the putative cytochrome P450 monooxygenases sdnB, sdnE, sdnF and sdnH to give a hydroxylated cycloaraneosene derivative such as cycloaraneosene-8,9,13,19-tetraol. Although the order of the hydroxylations is unclear, at least C8, C9 and C13 of the cycloaraneosene skeleton are hydroxylated before the sordaricin formation. Dehydration of the 13-hydroxy group of the hydroxylated cycloaraneosene derivative might be catalyzed by an unassigned hypothetical protein such as sdnG and sdnP to construct the cyclopentadiene moiety. The FAD-dependent oxidoreductase sdnN is proposed to catalyze the oxidation at C9 of the hydroxylated cycloaraneosene derivative and also catalyze the Baeyer-Villiger oxidation to give the lactone intermediate. The presumed lactone intermediate would be hydrolyzed to give an acrolein moiety and a carboxylate moiety. Then, [4+2]cycloaddition would occur between the acrolein moiety and the cyclopentadiene moiety to give sordaricin. SdnN might also be involved in the [4+2]cycloaddition after the hypothesized oxidation to accommodate the oxidized product and prompt the [4+2]cycloaddition. GDP-6-deoxy-D-altrose may be biosynthesized from GDP-D-mannose by the putative GDP-mannose-4,6-dehydratase sdnI and the short-chain dehydrogenase sdnK. The glycosyltransferase sdnJ catalyzes the attachment of 6-deoxy-D-altrose onto the 19-hydroxy group of sordaricin to give 4'-O-demethylsordarin. The methyltransferase sdnD would complete the biosynthesis of sordarin. Sordarin can be further modified into hypoxysordarin. The unique acyl chain at the 3'-hydroxy group of hypoxysordarin would be constructed by an iterative type I PKS sdnO and the trans-acting polyketide methyltransferase sdnL. SdnL would be responsible for the introduction of an alpha-methyl group of the polyketide chain. Alternatively, the beta-lactamase-like protein sdnR might be responsible for the cleavage and transfer of the polyketide chain from the PKS sdnO to sordarin. Two putative cytochrome P450 monooxygenases, sdnQ and sdnT, might catalyze the epoxidations of the polyketide chain to complete the biosynthesis of hypoxysordarin. Transcriptional regulators sdnM and sdnS are presumably encoded for the transcriptional regulation of the expression of the sdn gene cluster. The chain is Glycosyltransferase sdnJ from Sordaria araneosa (Pleurage araneosa).